The following is a 1149-amino-acid chain: Golgi apparatus protein 1 homolog (1149 aa).

Residues 1-19 form the signal peptide; that stretch reads MWRFPLILASVCWLTTAQQ. Topologically, residues 20 to 1115 are extracellular; sequence QNVANDPDKK…NLVMEHPERN (1096 aa). 16 Cys-rich GLG1 repeats span residues 24–69, 71–135, 139–207, 216–276, 277–344, 349–411, 415–475, 477–549, 551–610, 613–676, 677–736, 743–803, 809–867, 868–938, 945–1009, and 1010–1070; these read NDPD…FSET, TLSE…KNVT, KCHA…VKNA, ILGD…NDKF, MDPE…NQPE, QPSK…ESRN, KLGA…NVDS, DMVP…YDEQ, PLSV…ETDN, RKHP…DAKE, MNNK…FEHK, DLTD…IECL, HLGP…IVRL, LQRE…RQSI, DFSP…NKGL, and IRDK…DKQE. Asn133 carries an N-linked (GlcNAc...) asparagine glycan. Asn411 is a glycosylation site (N-linked (GlcNAc...) asparagine). The chain crosses the membrane as a helical span at residues 1116-1136; that stretch reads SILGYLAGFIVFILLIGCCCG. Residues 1137 to 1149 lie on the Cytoplasmic side of the membrane; sequence RVSKKQYIEMKNR.

The protein localises to the membrane. The chain is Golgi apparatus protein 1 homolog from Caenorhabditis elegans.